Here is a 517-residue protein sequence, read N- to C-terminus: Serine hydroxymethyltransferase 1, mitochondrial (517 aa).

A mitochondrion-targeting transit peptide spans 1–31; the sequence is MAMALALRRLSSSADKPLQRLFNGGHLYSMS. Residue Lys287 is modified to N6-(pyridoxal phosphate)lysine.

Belongs to the SHMT family. As to quaternary structure, homotetramer. It depends on pyridoxal 5'-phosphate as a cofactor.

Its subcellular location is the mitochondrion. The catalysed reaction is (6R)-5,10-methylene-5,6,7,8-tetrahydrofolate + glycine + H2O = (6S)-5,6,7,8-tetrahydrofolate + L-serine. The protein operates within one-carbon metabolism; tetrahydrofolate interconversion. Functionally, catalyzes the interconversion of serine and glycine. This chain is Serine hydroxymethyltransferase 1, mitochondrial, found in Flaveria pringlei.